The chain runs to 160 residues: uncharacterized protein (160 aa).

Residues 27-47 (VMNSYFIAGCGPAVCYYAVSW) form a helical membrane-spanning segment.

It localises to the membrane. This is an uncharacterized protein from Homo sapiens (Human).